Reading from the N-terminus, the 860-residue chain is Leucine--tRNA ligase (860 aa).

A 'HIGH' region motif is present at residues 42 to 52 (PYPSGRLHMGH). The short motif at 619–623 (KMSKS) is the 'KMSKS' region element. K622 provides a ligand contact to ATP.

This sequence belongs to the class-I aminoacyl-tRNA synthetase family.

Its subcellular location is the cytoplasm. It carries out the reaction tRNA(Leu) + L-leucine + ATP = L-leucyl-tRNA(Leu) + AMP + diphosphate. The chain is Leucine--tRNA ligase from Escherichia coli (strain 55989 / EAEC).